Reading from the N-terminus, the 256-residue chain is Diaminopimelate epimerase (256 aa).

The substrate site is built by N11 and N63. Residue C72 is the Proton donor of the active site. Residues 73–74 (GN), N169, and 187–188 (ER) contribute to the substrate site. The active-site Proton acceptor is the C197. 198 to 199 (GT) serves as a coordination point for substrate.

Belongs to the diaminopimelate epimerase family. As to quaternary structure, homodimer.

It is found in the cytoplasm. The catalysed reaction is (2S,6S)-2,6-diaminopimelate = meso-2,6-diaminopimelate. It participates in amino-acid biosynthesis; L-lysine biosynthesis via DAP pathway; DL-2,6-diaminopimelate from LL-2,6-diaminopimelate: step 1/1. Catalyzes the stereoinversion of LL-2,6-diaminopimelate (L,L-DAP) to meso-diaminopimelate (meso-DAP), a precursor of L-lysine and an essential component of the bacterial peptidoglycan. This Flavobacterium psychrophilum (strain ATCC 49511 / DSM 21280 / CIP 103535 / JIP02/86) protein is Diaminopimelate epimerase.